A 120-amino-acid polypeptide reads, in one-letter code: Large ribosomal subunit protein bL20 (120 aa).

This sequence belongs to the bacterial ribosomal protein bL20 family.

In terms of biological role, binds directly to 23S ribosomal RNA and is necessary for the in vitro assembly process of the 50S ribosomal subunit. It is not involved in the protein synthesizing functions of that subunit. The chain is Large ribosomal subunit protein bL20 from Desulforudis audaxviator (strain MP104C).